Here is a 188-residue protein sequence, read N- to C-terminus: M-phase phosphoprotein 6 homolog (188 aa).

Positions 93–188 (EENVDEKDVS…NKNKKKKKRN (96 aa)) are disordered. Residues 120-149 (LTERERRKQELVSKKAEASRKMEVKAPAKE) are compositionally biased toward basic and acidic residues. At serine 167 the chain carries Phosphoserine. Basic residues predominate over residues 174–188 (RKTKKNKNKKKKKRN).

The protein belongs to the MPP6 family. In terms of assembly, associates with the RNA exosome complex.

The protein resides in the nucleus. Functionally, RNA-binding protein that associates with the RNA exosome complex. This is M-phase phosphoprotein 6 homolog from Schizosaccharomyces pombe (strain 972 / ATCC 24843) (Fission yeast).